The chain runs to 79 residues: Acyl carrier protein (79 aa).

Residues 2-77 (DNIEQRVKKI…LAIDFAKSKA (76 aa)) enclose the Carrier domain. O-(pantetheine 4'-phosphoryl)serine is present on Ser37.

It belongs to the acyl carrier protein (ACP) family. In terms of processing, 4'-phosphopantetheine is transferred from CoA to a specific serine of apo-ACP by AcpS. This modification is essential for activity because fatty acids are bound in thioester linkage to the sulfhydryl of the prosthetic group.

It is found in the cytoplasm. It participates in lipid metabolism; fatty acid biosynthesis. Functionally, carrier of the growing fatty acid chain in fatty acid biosynthesis. The protein is Acyl carrier protein of Polynucleobacter necessarius subsp. necessarius (strain STIR1).